The following is a 340-amino-acid chain: Adenosine kinase (340 aa).

D293 is a catalytic residue.

It belongs to the carbohydrate kinase PfkB family. As to quaternary structure, monomer. It depends on Mg(2+) as a cofactor.

The catalysed reaction is adenosine + ATP = AMP + ADP + H(+). Its pathway is purine metabolism; AMP biosynthesis via salvage pathway; AMP from adenosine: step 1/1. ATP dependent phosphorylation of adenosine and other related nucleoside analogs to monophosphate derivatives. This chain is Adenosine kinase (adk), found in Dictyostelium discoideum (Social amoeba).